The following is a 103-amino-acid chain: MIGKEVTVRDIVLELSEVQPEVLPVDLFCDEELPNEQQAEEELDIDRVVFKVIAPCGCSCCEVKLRIFVNATNRGIRTFQELLTGDLQLLCPECRGNCKHGGF.

The segment at 1–45 (MIGKEVTVRDIVLELSEVQPEVLPVDLFCDEELPNEQQAEEELDI) is E7 terminal domain. An LXCXE motif; interaction with host RB1 and TMEM173/STING motif is present at residues 27–31 (LFCDE). The segment at 56-94 (CGCSCCEVKLRIFVNATNRGIRTFQELLTGDLQLLCPEC) is a zinc-finger region. The Nuclear export signal signature appears at 76–84 (IRTFQELLT).

It belongs to the papillomaviridae E7 protein family. In terms of assembly, homodimer. Homooligomer. Interacts with host RB1; this interaction induces dissociation of RB1-E2F1 complex thereby disrupting RB1 activity. Interacts with host EP300; this interaction represses EP300 transcriptional activity. Interacts with protein E2; this interaction inhibits E7 oncogenic activity. Interacts with host TMEM173/STING; this interaction impairs the ability of TMEM173/STING to sense cytosolic DNA and promote the production of type I interferon (IFN-alpha and IFN-beta). Post-translationally, highly phosphorylated.

The protein resides in the host cytoplasm. It localises to the host nucleus. Plays a role in viral genome replication by driving entry of quiescent cells into the cell cycle. Stimulation of progression from G1 to S phase allows the virus to efficiently use the cellular DNA replicating machinery to achieve viral genome replication. E7 protein has both transforming and trans-activating activities. Induces the disassembly of the E2F1 transcription factor from RB1, with subsequent transcriptional activation of E2F1-regulated S-phase genes. Interferes with host histone deacetylation mediated by HDAC1 and HDAC2, leading to transcription activation. Also plays a role in the inhibition of both antiviral and antiproliferative functions of host interferon alpha. Interaction with host TMEM173/STING impairs the ability of TMEM173/STING to sense cytosolic DNA and promote the production of type I interferon (IFN-alpha and IFN-beta). The protein is Protein E7 of Homo sapiens (Human).